A 530-amino-acid chain; its full sequence is MKSIIFNEIKKILECDFALENPKDKNLAHFATPLAFSLAKELKKSPMLIASDLASKFQNHDCFESVEAVNGYLNFRISKTFLNELANQALTNPNDFTKGEKKQESFLLEYVSANPTGPLHIGHARGAVFGDTLTRLARHLGYKFNTEYYVNDAGNQIYLLGLSILLSVKESILHENVEYPEQYYKGEYIVDLAKEAFEKFGKEFFSEENIPSLADWAKDKMLVLIKQNLEQAKIKIDSYVSERSYYDALNATLESLKEHKGIYEQEGKIWLASSQKGDEKDRVIIREDGRGTYLAADIVYHKDKMSRGYGKCINIWGADHHGYIPRMKAAMEFLGFDSNNLEIILAQMVSLLKDGEPYKMSKRAGNFILMSDVVDEIGSDALRYIFLSKKCDTHLEFDISDLQKEDSSNPVYYINYAHARIHQVFAKAGKKIDDVMKADLQSLNQDGVNLLFEALNLKAVLNDAFEARALQKIPDYLKNLAANFHKFYNENKVVGSANENDLLKLFSLVALSIKTAFSLMGIEAKNKMEH.

The short motif at 113–123 (ANPTGPLHIGH) is the 'HIGH' region element.

Belongs to the class-I aminoacyl-tRNA synthetase family. As to quaternary structure, monomer.

The protein localises to the cytoplasm. The catalysed reaction is tRNA(Arg) + L-arginine + ATP = L-arginyl-tRNA(Arg) + AMP + diphosphate. In Campylobacter jejuni subsp. jejuni serotype O:2 (strain ATCC 700819 / NCTC 11168), this protein is Arginine--tRNA ligase.